We begin with the raw amino-acid sequence, 330 residues long: MAAPRSWALWSFCGCGWSRAVSGCRLPGLRSSSPRGPLGARLLSQEKEATETHFGFETVSEEEKGGKVYQVFESVAKKYDVMNDMMSLGIHRVWKDLLLWKMRPFPGTQLLDVAGGTGDIAFRFLNYVQAQHQRKQKRQLRAQQNLSWEEIARKYQNEEDSLGGSHVMVCDINKEMLKIGKQKARAQGYKAGLAWILGDAEELPFDDNKFDVYTIAFGIRNVTHIDQALQEAHRVLKPGGRFLCLEFSQVNNPLLSRLYDVYSFQVIPVLGEVIAGDWKSYQYLVESIRQFPSQEEFKEMIEDAGFQKVTYENLTSGIVAIHSGFKLYLR.

The N-terminal 42 residues, 1–42 (MAAPRSWALWSFCGCGWSRAVSGCRLPGLRSSSPRGPLGARL), are a transit peptide targeting the mitochondrion. Residues threonine 117, aspartate 171, and 199–200 (DA) each bind S-adenosyl-L-methionine.

Belongs to the class I-like SAM-binding methyltransferase superfamily. MenG/UbiE family. As to quaternary structure, component of a multi-subunit COQ enzyme complex, composed of at least COQ3, COQ4, COQ5, COQ6, COQ7 and COQ9. Interacts with PYURF; the interaction is direct, stabilizes COQ5 protein and associates PYURF with COQ enzyme complex.

The protein resides in the mitochondrion inner membrane. The enzyme catalyses 2-methoxy-6-(all-trans-decaprenyl)benzene-1,4-diol + S-adenosyl-L-methionine = 5-methoxy-2-methyl-3-(all-trans-decaprenyl)benzene-1,4-diol + S-adenosyl-L-homocysteine + H(+). It functions in the pathway cofactor biosynthesis; ubiquinone biosynthesis. Methyltransferase required for the conversion of 2-decaprenyl-6-methoxy-1,4-benzoquinol (DDMQH2) to 2-decaprenyl-3-methyl-6-methoxy-1,4-benzoquinol (DMQH2). The sequence is that of 2-methoxy-6-polyprenyl-1,4-benzoquinol methylase, mitochondrial from Bos taurus (Bovine).